Consider the following 327-residue polypeptide: (-)-delta-cadinene synthase (327 aa).

Mg(2+)-binding residues include aspartate 84, aspartate 85, asparagine 222, threonine 226, and glutamate 230.

Belongs to the terpene synthase family.

It carries out the reaction (2E,6E)-farnesyl diphosphate = (-)-delta-cadinene + diphosphate. Its function is as follows. Catalyzes the conversion of (2E,6E)-farnesyl diphosphate into (-)-delta-cadinene. Cyclization mechanism involves an intermediate nerolidyl diphosphate leading to a helminthogermacradienyl cation. This chain is (-)-delta-cadinene synthase, found in Streptomyces clavuligerus.